A 241-amino-acid polypeptide reads, in one-letter code: ATP synthase subunit a (241 aa).

The next 5 helical transmembrane spans lie at 30 to 50 (GQVFMTSWILIGALLTLVVVG), 91 to 111 (FIGTLFLFIFVSNWGGALIPW), 128 to 148 (INTTVALALLVSLSYFYAGLS), 193 to 213 (LVVAVLVFLVPLVLPVPVMFL), and 214 to 234 (GLFTSAIQALIFATLAAYYIG).

The protein belongs to the ATPase A chain family. F-type ATPases have 2 components, CF(1) - the catalytic core - and CF(0) - the membrane proton channel. CF(1) has five subunits: alpha(3), beta(3), gamma(1), delta(1), epsilon(1). CF(0) has four main subunits: a, b, b' and c.

It localises to the cellular thylakoid membrane. In terms of biological role, key component of the proton channel; it plays a direct role in the translocation of protons across the membrane. The polypeptide is ATP synthase subunit a (Prochlorococcus marinus (strain SARG / CCMP1375 / SS120)).